A 255-amino-acid chain; its full sequence is Thiazole synthase (255 aa).

Catalysis depends on K96, which acts as the Schiff-base intermediate with DXP. Residues G157, 183-184 (AG), and 205-206 (NT) each bind 1-deoxy-D-xylulose 5-phosphate.

This sequence belongs to the ThiG family. Homotetramer. Forms heterodimers with either ThiH or ThiS.

Its subcellular location is the cytoplasm. It carries out the reaction [ThiS sulfur-carrier protein]-C-terminal-Gly-aminoethanethioate + 2-iminoacetate + 1-deoxy-D-xylulose 5-phosphate = [ThiS sulfur-carrier protein]-C-terminal Gly-Gly + 2-[(2R,5Z)-2-carboxy-4-methylthiazol-5(2H)-ylidene]ethyl phosphate + 2 H2O + H(+). It participates in cofactor biosynthesis; thiamine diphosphate biosynthesis. Catalyzes the rearrangement of 1-deoxy-D-xylulose 5-phosphate (DXP) to produce the thiazole phosphate moiety of thiamine. Sulfur is provided by the thiocarboxylate moiety of the carrier protein ThiS. In vitro, sulfur can be provided by H(2)S. In Bacillus licheniformis (strain ATCC 14580 / DSM 13 / JCM 2505 / CCUG 7422 / NBRC 12200 / NCIMB 9375 / NCTC 10341 / NRRL NRS-1264 / Gibson 46), this protein is Thiazole synthase.